A 95-amino-acid polypeptide reads, in one-letter code: MGAVFAIIGGFALDSPILRLYLDQLSLNHFTDIVGATKVSSLNIPWPLRIPRRIRLPGRLYNMKYCFINRLIHFPNCRNSNNFYNSEKPSPQNEK.

The N-terminal stretch at 1-20 is a signal peptide; that stretch reads MGAVFAIIGGFALDSPILRL.

In Oryctolagus cuniculus (Rabbit), this protein is Blastocyst protein 4.